A 308-amino-acid chain; its full sequence is Ribosomal RNA large subunit methyltransferase F (308 aa).

This sequence belongs to the methyltransferase superfamily. METTL16/RlmF family.

The protein localises to the cytoplasm. It catalyses the reaction adenosine(1618) in 23S rRNA + S-adenosyl-L-methionine = N(6)-methyladenosine(1618) in 23S rRNA + S-adenosyl-L-homocysteine + H(+). In terms of biological role, specifically methylates the adenine in position 1618 of 23S rRNA. The polypeptide is Ribosomal RNA large subunit methyltransferase F (Escherichia coli (strain K12 / MC4100 / BW2952)).